We begin with the raw amino-acid sequence, 261 residues long: Triosephosphate isomerase (261 aa).

D-glyceraldehyde 3-phosphate contacts are provided by asparagine 11 and lysine 13. The active-site Electrophile is histidine 102. The active-site Proton acceptor is the glutamate 174. Glycine 180, leucine 239, and glycine 241 together coordinate D-glyceraldehyde 3-phosphate.

It belongs to the triosephosphate isomerase family. As to quaternary structure, homodimer.

The enzyme catalyses D-glyceraldehyde 3-phosphate = dihydroxyacetone phosphate. Its pathway is carbohydrate biosynthesis; gluconeogenesis. It participates in carbohydrate degradation; glycolysis; D-glyceraldehyde 3-phosphate from glycerone phosphate: step 1/1. Functionally, catalyzes the interconversion of glyceraldehyde 3-phosphate and dihydroxyacetone phosphate in the glycolytic and gluconeogenic pathways. This is Triosephosphate isomerase from Entamoeba histolytica (strain ATCC 30459 / HM-1:IMSS / ABRM).